Here is a 78-residue protein sequence, read N- to C-terminus: Large ribosomal subunit protein bL28 (78 aa).

Residues 1 to 22 form a disordered region; the sequence is MSKVCQVTGKRPTTGNNVSHAN. Over residues 11–22 the composition is skewed to polar residues; that stretch reads RPTTGNNVSHAN.

Belongs to the bacterial ribosomal protein bL28 family.

The chain is Large ribosomal subunit protein bL28 from Alkalilimnicola ehrlichii (strain ATCC BAA-1101 / DSM 17681 / MLHE-1).